We begin with the raw amino-acid sequence, 86 residues long: Small ribosomal subunit protein uS15c (86 aa).

This sequence belongs to the universal ribosomal protein uS15 family. As to quaternary structure, part of the 30S ribosomal subunit.

It is found in the plastid. It localises to the chloroplast. This is Small ribosomal subunit protein uS15c (rps15) from Cryptomeria japonica (Japanese cedar).